A 191-amino-acid polypeptide reads, in one-letter code: uncharacterized protein (191 aa).

In terms of domain architecture, Fe2OG dioxygenase spans 87 to 184 (EFDSALIFHY…RIAITFRQMG (98 aa)).

This is an uncharacterized protein from Acanthamoeba polyphaga mimivirus (APMV).